A 206-amino-acid chain; its full sequence is Ribosomal RNA small subunit methyltransferase G (206 aa).

S-adenosyl-L-methionine contacts are provided by residues glycine 73, leucine 78, 124–125, and arginine 139; that span reads VE.

Belongs to the methyltransferase superfamily. RNA methyltransferase RsmG family.

It localises to the cytoplasm. The enzyme catalyses guanosine(527) in 16S rRNA + S-adenosyl-L-methionine = N(7)-methylguanosine(527) in 16S rRNA + S-adenosyl-L-homocysteine. Its function is as follows. Specifically methylates the N7 position of guanine in position 527 of 16S rRNA. This is Ribosomal RNA small subunit methyltransferase G from Sodalis glossinidius (strain morsitans).